The chain runs to 147 residues: Lysozyme C-3 (147 aa).

The first 18 residues, 1 to 18, serve as a signal peptide directing secretion; it reads MKALVILGLLFLSVAVQG. The region spanning 19–147 is the C-type lysozyme domain; it reads KVFERCELAR…VSSYVEGCKL (129 aa). 4 disulfide bridges follow: Cys24-Cys145, Cys48-Cys133, Cys83-Cys99, and Cys95-Cys113. Residues Glu53 and Asp71 contribute to the active site.

This sequence belongs to the glycosyl hydrolase 22 family. Monomer. As to expression, expressed in stomach.

It localises to the secreted. The enzyme catalyses Hydrolysis of (1-&gt;4)-beta-linkages between N-acetylmuramic acid and N-acetyl-D-glucosamine residues in a peptidoglycan and between N-acetyl-D-glucosamine residues in chitodextrins.. Its function is as follows. Lysozymes have primarily a bacteriolytic function; those in tissues and body fluids are associated with the monocyte-macrophage system and enhance the activity of immunoagents. This Ovis aries (Sheep) protein is Lysozyme C-3.